The chain runs to 91 residues: Putative defensin-like protein 83 (91 aa).

A signal peptide spans 1–27 (MATNKFLSILLLSLMAFAAILLPMISG). Disulfide bonds link Cys-32–Cys-71, Cys-37–Cys-57, Cys-43–Cys-69, and Cys-47–Cys-70.

This sequence belongs to the DEFL family.

The protein resides in the secreted. This is Putative defensin-like protein 83 (LCR46) from Arabidopsis thaliana (Mouse-ear cress).